A 182-amino-acid polypeptide reads, in one-letter code: Ribosome maturation factor RimM (182 aa).

The PRC barrel domain occupies 103–182 (EDEFYWRELF…RIEVDWDPAF (80 aa)).

It belongs to the RimM family. As to quaternary structure, binds ribosomal protein uS19.

Its subcellular location is the cytoplasm. Functionally, an accessory protein needed during the final step in the assembly of 30S ribosomal subunit, possibly for assembly of the head region. Essential for efficient processing of 16S rRNA. May be needed both before and after RbfA during the maturation of 16S rRNA. It has affinity for free ribosomal 30S subunits but not for 70S ribosomes. In Vibrio cholerae serotype O1 (strain ATCC 39315 / El Tor Inaba N16961), this protein is Ribosome maturation factor RimM.